An 82-amino-acid chain; its full sequence is Translational regulator CsrA (82 aa).

Belongs to the CsrA/RsmA family. As to quaternary structure, homodimer; the beta-strands of each monomer intercalate to form a hydrophobic core while the alpha-helices form wings that extend away from the core. Each of the alpha-helical wings interacts with an FliW monomer, yielding a FliW-CsrA(2)-FliW complex.

The protein localises to the cytoplasm. In terms of biological role, a translational regulator that binds mRNA to regulate translation initiation and/or mRNA stability. Usually binds in the 5'-UTR at or near the Shine-Dalgarno sequence preventing ribosome-binding, thus repressing translation. Its main target seems to be the major flagellin gene, while its function is anatagonized by FliW. This Geobacillus thermodenitrificans (strain NG80-2) protein is Translational regulator CsrA.